We begin with the raw amino-acid sequence, 73 residues long: Antitoxin VapB2 (73 aa).

Forms a homodimer, which binds to a toxin homodimer, which then oligomerizes further to a hetero-octamer. When bound to toxin VapC2 the toxin activity is inhibited; 1 antitoxin may suffice to inhibit toxin.

Its function is as follows. Antitoxin component of a type II toxin-antitoxin (TA) system. Upon expression in M.smegmatis neutralizes the effect of cognate toxin VapC2. The C-terminal helix of the antitoxin may obstruct the toxin's RNA-binding groove, blocking access to the active sites. Additionally, the C-terminal arginine of the antitoxin may remove Mg(2+) ions from the toxin active sites. This chain is Antitoxin VapB2 (vapB2), found in Mycobacterium tuberculosis (strain ATCC 25618 / H37Rv).